Consider the following 375-residue polypeptide: Geranylgeranyl transferase type-1 subunit beta (375 aa).

Residues 1–33 are disordered; the sequence is MSETAVSIDSDRSKSEEEDEEEYSPPVQSSPSA. Position 2 is an N-acetylserine (Ser2). PFTB repeat units follow at residues 157–199, 206–247, 265–306, and 313–354; these read SKSL…YMLD, KESA…RLMG, PSLL…KLIG, and KMAL…SLLE. Geranylgeranyl diphosphate contacts are provided by residues 232 to 234 and 285 to 288; these read HGG and RTNK. Residues Asp291 and Cys293 each coordinate Zn(2+). 294–297 is a geranylgeranyl diphosphate binding site; the sequence is YAFW. His342 is a Zn(2+) binding site.

This sequence belongs to the protein prenyltransferase subunit beta family. As to quaternary structure, heterodimer of an alpha and a beta subunit. It depends on Zn(2+) as a cofactor. The cofactor is Mg(2+). In terms of tissue distribution, expressed in roots, leaves, stems, flowers and siliques.

The catalysed reaction is geranylgeranyl diphosphate + L-cysteinyl-[protein] = S-geranylgeranyl-L-cysteinyl-[protein] + diphosphate. Its function is as follows. Catalyzes the transfer of a geranyl-geranyl moiety from geranyl-geranyl pyrophosphate to a cysteine at the fourth position from the C-terminus of proteins having the C-terminal sequence Cys-aliphatic-aliphatic-X (CaaX). Seems to exclusively prenylate CaaX substrates with leucine in the terminal position. The beta subunit is responsible for peptide-binding. May negatively regulate abscisic acid (ABA) signaling in guard cells and auxin-induced lateral root initiation. Negatively regulates ABA signaling in guard cells. in negative regulation of auxin-induced lateral root initiation. This Arabidopsis thaliana (Mouse-ear cress) protein is Geranylgeranyl transferase type-1 subunit beta (GGB).